We begin with the raw amino-acid sequence, 974 residues long: Valine--tRNA ligase, chloroplastic/mitochondrial 2 (974 aa).

The short motif at 109–119 (PNVTGSLHMGH) is the 'HIGH' region element. One copy of the LRR 1 repeat lies at 432 to 454 (LAEKALLAVENKELTIIPERFEK). Positions 489 to 518 (EEDYIVAKSAEEALEKALEKYGKDVEIYQD) form a coiled coil. The 'KMSKS' region signature appears at 598–602 (KMSKS). Position 601 (lysine 601) interacts with ATP. An LRR 2 repeat occupies 857 to 880 (LALLSRLDLNNVHFSNAPPGDANL).

This sequence belongs to the class-I aminoacyl-tRNA synthetase family.

Its subcellular location is the plastid. The protein localises to the chloroplast. It is found in the mitochondrion. It catalyses the reaction tRNA(Val) + L-valine + ATP = L-valyl-tRNA(Val) + AMP + diphosphate. The polypeptide is Valine--tRNA ligase, chloroplastic/mitochondrial 2 (Arabidopsis thaliana (Mouse-ear cress)).